The sequence spans 200 residues: Pyridoxal 5'-phosphate synthase subunit PdxT (200 aa).

46–48 (GES) contributes to the L-glutamine binding site. Catalysis depends on Cys78, which acts as the Nucleophile. L-glutamine contacts are provided by residues Arg107 and 138–139 (IR). Residues His175 and Glu177 each act as charge relay system in the active site.

This sequence belongs to the glutaminase PdxT/SNO family. In terms of assembly, in the presence of PdxS, forms a dodecamer of heterodimers. Only shows activity in the heterodimer.

The catalysed reaction is aldehydo-D-ribose 5-phosphate + D-glyceraldehyde 3-phosphate + L-glutamine = pyridoxal 5'-phosphate + L-glutamate + phosphate + 3 H2O + H(+). It carries out the reaction L-glutamine + H2O = L-glutamate + NH4(+). The protein operates within cofactor biosynthesis; pyridoxal 5'-phosphate biosynthesis. Functionally, catalyzes the hydrolysis of glutamine to glutamate and ammonia as part of the biosynthesis of pyridoxal 5'-phosphate. The resulting ammonia molecule is channeled to the active site of PdxS. This Corynebacterium glutamicum (strain ATCC 13032 / DSM 20300 / JCM 1318 / BCRC 11384 / CCUG 27702 / LMG 3730 / NBRC 12168 / NCIMB 10025 / NRRL B-2784 / 534) protein is Pyridoxal 5'-phosphate synthase subunit PdxT.